The following is a 512-amino-acid chain: 2-isopropylmalate synthase (512 aa).

The Pyruvate carboxyltransferase domain occupies 5 to 268 (LIIFDTTLRD…DLNIDTTHIV (264 aa)). Mn(2+)-binding residues include Asp14, His202, His204, and Asn239. The regulatory domain stretch occupies residues 394-512 (AFVSLSQHSE…SQAEKVAAQG (119 aa)).

The protein belongs to the alpha-IPM synthase/homocitrate synthase family. LeuA type 1 subfamily. In terms of assembly, homodimer. Mn(2+) is required as a cofactor.

The protein resides in the cytoplasm. It carries out the reaction 3-methyl-2-oxobutanoate + acetyl-CoA + H2O = (2S)-2-isopropylmalate + CoA + H(+). The protein operates within amino-acid biosynthesis; L-leucine biosynthesis; L-leucine from 3-methyl-2-oxobutanoate: step 1/4. Functionally, catalyzes the condensation of the acetyl group of acetyl-CoA with 3-methyl-2-oxobutanoate (2-ketoisovalerate) to form 3-carboxy-3-hydroxy-4-methylpentanoate (2-isopropylmalate). The sequence is that of 2-isopropylmalate synthase from Variovorax paradoxus (strain S110).